A 352-amino-acid chain; its full sequence is Holliday junction branch migration complex subunit RuvB (352 aa).

The segment at F13–Y201 is large ATPase domain (RuvB-L). ATP contacts are provided by residues R41, G82, K85, T86, T87, E148–F150, R191, Y201, and R238. Residue T86 coordinates Mg(2+). The small ATPAse domain (RuvB-S) stretch occupies residues T202–Q273. Residues E276 to F352 are head domain (RuvB-H). Residues R330 and R335 each coordinate DNA.

This sequence belongs to the RuvB family. In terms of assembly, homohexamer. Forms an RuvA(8)-RuvB(12)-Holliday junction (HJ) complex. HJ DNA is sandwiched between 2 RuvA tetramers; dsDNA enters through RuvA and exits via RuvB. An RuvB hexamer assembles on each DNA strand where it exits the tetramer. Each RuvB hexamer is contacted by two RuvA subunits (via domain III) on 2 adjacent RuvB subunits; this complex drives branch migration. In the full resolvosome a probable DNA-RuvA(4)-RuvB(12)-RuvC(2) complex forms which resolves the HJ.

It localises to the cytoplasm. It carries out the reaction ATP + H2O = ADP + phosphate + H(+). In terms of biological role, the RuvA-RuvB-RuvC complex processes Holliday junction (HJ) DNA during genetic recombination and DNA repair, while the RuvA-RuvB complex plays an important role in the rescue of blocked DNA replication forks via replication fork reversal (RFR). RuvA specifically binds to HJ cruciform DNA, conferring on it an open structure. The RuvB hexamer acts as an ATP-dependent pump, pulling dsDNA into and through the RuvAB complex. RuvB forms 2 homohexamers on either side of HJ DNA bound by 1 or 2 RuvA tetramers; 4 subunits per hexamer contact DNA at a time. Coordinated motions by a converter formed by DNA-disengaged RuvB subunits stimulates ATP hydrolysis and nucleotide exchange. Immobilization of the converter enables RuvB to convert the ATP-contained energy into a lever motion, pulling 2 nucleotides of DNA out of the RuvA tetramer per ATP hydrolyzed, thus driving DNA branch migration. The RuvB motors rotate together with the DNA substrate, which together with the progressing nucleotide cycle form the mechanistic basis for DNA recombination by continuous HJ branch migration. Branch migration allows RuvC to scan DNA until it finds its consensus sequence, where it cleaves and resolves cruciform DNA. In Prochlorococcus marinus (strain MIT 9312), this protein is Holliday junction branch migration complex subunit RuvB.